The following is a 323-amino-acid chain: Calcium homeostasis modulator protein 2 (323 aa).

The Cytoplasmic portion of the chain corresponds to 1-21 (MAALIAENFRFLSLFFKSKDV). The segment at 14-39 (LFFKSKDVMIFNGLVALGTVGSQELF) is central pore. The helical transmembrane segment at 22–43 (MIFNGLVALGTVGSQELFSVVA) threads the bilayer. The Extracellular portion of the chain corresponds to 44 to 52 (FHCPCSPAR). Cystine bridges form between Cys-46/Cys-130 and Cys-48/Cys-162. A helical membrane pass occupies residues 53–76 (NYLYGLAAIGVPALVLFIIGIILN). Topologically, residues 77-101 (NHTWNLVAECQHRRTKNCSAAPTFL) are cytoplasmic. The helical transmembrane segment at 102-132 (LLSSILGRAAVAPVTWSVISLLRGEAYVCAL) threads the bilayer. Residues 133–179 (SEFVDPSSLTAREEHFPSAHATEILARFPCKENPDNLSDFREEVSRR) lie on the Extracellular side of the membrane. The tract at residues 145-152 (EEHFPSAH) is hemichannel docking. Residues 180-206 (LRYESQLFGWLLIGVVAILVFLTKCLK) form a helical membrane-spanning segment. At 207 to 323 (HYCSPLSYRQ…DNVEMALLPS (117 aa)) the chain is on the cytoplasmic side. Residues 214-251 (YRQEAYWAQYRANEDQLFQRTAEVHSRVLAANNVRRFF) are intersubunit interaction.

It belongs to the CALHM family. In terms of assembly, homo-undecamer. Two undecameric hemichannels can assemble in a head-to-head manner to form a gap junction. Placenta.

It is found in the cell membrane. The enzyme catalyses ATP(in) = ATP(out). Inhibited by Ca(2+) and ruthenium red in a voltage-dependent way. Pore-forming subunit of Ca(2+) homeostasis modulator channels. Mediates ATP release from astrocytes and ATP-induced Ca(2+) influx in microglia thus regulating neuronal ATP and Ca(2+) homeostasis, synaptic transmission and neuroinflammatory response. May form intercellular gap junctions. The gating mechanism remains unknown. The protein is Calcium homeostasis modulator protein 2 of Homo sapiens (Human).